Consider the following 206-residue polypeptide: Tumor protein D54 (206 aa).

Met-1 bears the N-acetylmethionine mark. Residues 1–14 show a composition bias toward polar residues; sequence MDSAGQDINLNSPN. The disordered stretch occupies residues 1 to 24; sequence MDSAGQDINLNSPNKGLLSDSMTD. Residues Ser-3, Ser-12, Ser-19, and Ser-21 each carry the phosphoserine modification. Residues 38–82 adopt a coiled-coil conformation; the sequence is VEGLTEAEEEELRAELTKVEEEIVTLRQVLAAKERHCGELKRRLG. Residues Ser-96, Ser-149, and Ser-161 each carry the phosphoserine modification. Thr-163 carries the post-translational modification Phosphothreonine. Ser-166 bears the Phosphoserine mark. Residue Thr-173 is modified to Phosphothreonine. The segment covering 175-185 has biased composition (basic and acidic residues); the sequence is KSKVVGDRENG. The tract at residues 175 to 206 is disordered; the sequence is KSKVVGDRENGSDSLPSSAGSGDKPLSDPAPF. Residues Ser-192 and Ser-195 each carry the phosphoserine modification.

Belongs to the TPD52 family. As to quaternary structure, forms a homodimer or heterodimer with other members of the family. Interacts with MAL2.

In Pongo abelii (Sumatran orangutan), this protein is Tumor protein D54 (TPD52L2).